A 93-amino-acid polypeptide reads, in one-letter code: Putative membrane protein insertion efficiency factor (93 aa).

Belongs to the UPF0161 family.

The protein localises to the cell inner membrane. In terms of biological role, could be involved in insertion of integral membrane proteins into the membrane. In Cupriavidus taiwanensis (strain DSM 17343 / BCRC 17206 / CCUG 44338 / CIP 107171 / LMG 19424 / R1) (Ralstonia taiwanensis (strain LMG 19424)), this protein is Putative membrane protein insertion efficiency factor.